The primary structure comprises 484 residues: Auxin transporter-like protein 2 (484 aa).

The Cytoplasmic portion of the chain corresponds to 1 to 59; it reads MLPQKQGEEAIVSSFNETDQQEGVVGREEEVEDHSFSVKNFLWHGGSVWDAWFSCASNQ. Residues 60-77 traverse the membrane as a helical segment; that stretch reads VAQVLLTLPYSFSQLGML. Residues 78 to 79 lie on the Extracellular side of the membrane; the sequence is SG. A helical transmembrane segment spans residues 80–100; sequence ILLQVFYGILGSWTAYLISVL. Residues 101 to 135 are Cytoplasmic-facing; it reads YVEYRSRKEKENVNFKNHVIQWFEVLDGLLGPYWK. The chain crosses the membrane as a helical span at residues 136–156; the sequence is ALGLAFNCTFLLFGSVIQLIA. The Extracellular segment spans residues 157-172; it reads CASNIYYINDNLDKRT. A helical transmembrane segment spans residues 173–193; sequence WTYIFGACCATTVFIPSFHNY. The Cytoplasmic segment spans residues 194 to 196; it reads RIW. A helical membrane pass occupies residues 197–217; that stretch reads SFLGLGMTTYTAWYLTIASIV. Residues 218-232 are Extracellular-facing; that stretch reads HGQAENVTHTGPKKL. An N-linked (GlcNAc...) asparagine glycan is attached at Asn223. Residues 233-253 traverse the membrane as a helical segment; that stretch reads VLYFTGATNILYTFGGHAVTV. The Cytoplasmic portion of the chain corresponds to 254 to 266; it reads EIMHAMWKPQKFK. The chain crosses the membrane as a helical span at residues 267-287; sequence YIYLMATLYVFTLTIPSATAV. The Extracellular portion of the chain corresponds to 288–314; the sequence is YWAFGDELLNHSNAFSLLPKNGWRDGA. Asn297 carries an N-linked (GlcNAc...) asparagine glycan. The chain crosses the membrane as a helical span at residues 315–335; the sequence is VILMLIHQFITFGFACTPLYF. Topologically, residues 336–356 are cytoplasmic; it reads VWEKVIGMHDTRSICLRALAR. Residues 357–377 traverse the membrane as a helical segment; that stretch reads LPVVIPIWFLAIIFPFFGPIN. Residue Ser378 is a topological domain, extracellular. The chain crosses the membrane as a helical span at residues 379 to 399; sequence AVGALLVSFTVYIIPSAAHML. Residues 400–425 lie on the Cytoplasmic side of the membrane; sequence TYRKASARKNAAEKPPFFMPSWTAMY. Residues 426 to 446 form a helical membrane-spanning segment; that stretch reads IFNAFIVIWVLVVGFGFGGWA. The Extracellular segment spans residues 447 to 484; sequence SMTNFIRQIDTFGLFAKCYQCKPPPVMAAAPPPHALHH.

This sequence belongs to the amino acid/polyamine transporter 2 family. Amino acid/auxin permease (AAAP) (TC 2.A.18.1) subfamily. As to expression, shoots and roots of nodulating plants. Higher levels in roots, flowers and stems, lower in nodules, leaves, petioles and shoot apices.

Its subcellular location is the cell membrane. In terms of biological role, carrier protein involved in proton-driven auxin influx. Mediates the formation of auxin gradient from developing leaves (site of auxin biosynthesis) to tips by contributing to the loading of auxin in vascular tissues and facilitating acropetal (base to tip) auxin transport within inner tissues of the root apex, and basipetal (tip to base) auxin transport within outer tissues of the root apex. May be involved in lateral roots and nodules formation. This Medicago truncatula (Barrel medic) protein is Auxin transporter-like protein 2 (LAX2).